The primary structure comprises 647 residues: UvrABC system protein C (647 aa).

One can recognise a GIY-YIG domain in the interval 26 to 106 (SEPGCYLMRD…IKEHQPYFNI (81 aa)). One can recognise a UVR domain in the interval 216–251 (DQLKDLLHKQMLIQSKLQEFEKAAIIRDQIKGIEQL).

This sequence belongs to the UvrC family. In terms of assembly, interacts with UvrB in an incision complex.

Its subcellular location is the cytoplasm. Its function is as follows. The UvrABC repair system catalyzes the recognition and processing of DNA lesions. UvrC both incises the 5' and 3' sides of the lesion. The N-terminal half is responsible for the 3' incision and the C-terminal half is responsible for the 5' incision. This is UvrABC system protein C from Prochlorococcus marinus (strain MIT 9211).